The following is a 373-amino-acid chain: Protein SENSITIVE TO PROTON RHIZOTOXICITY 2 (373 aa).

2 C2H2-type zinc fingers span residues 217–239 (HYCQICGKGFKRDANLRMHMRAH) and 327–362 (KHCGDIKWVCSCGTKFSRKDKLMSHVSLFLGHVPAH).

Expressed at low levels in roots (e.g. root tips and lateral roots), leaves (e.g. at the edge of mature leaves, possibly in hydathodes, and in vascular bundles), flowers (e.g. floral filaments), stems, siliques and cotyledons.

The protein resides in the nucleus. Functionally, probable transcription factor. Together with STOP1, plays a critical role in tolerance to major stress factors in acid soils such as proton H(+) and aluminum ion Al(3+). Required for the expression of genes in response to acidic stress (e.g. ALMT1 and MATE), and Al-activated citrate exudation. The sequence is that of Protein SENSITIVE TO PROTON RHIZOTOXICITY 2 from Arabidopsis thaliana (Mouse-ear cress).